Here is an 85-residue protein sequence, read N- to C-terminus: Putative sodium channel toxin Ts34 (85 aa).

An N-terminal signal peptide occupies residues 1 to 17 (MNLPLLLLITILIEIHA). The LCN-type CS-alpha/beta domain maps to 19 to 82 (KDGYVIYKNS…IYGETGSYCW (64 aa)). 4 disulfide bridges follow: C30–C81, C34–C57, C43–C62, and C47–C64.

This sequence belongs to the long (4 C-C) scorpion toxin superfamily. Sodium channel inhibitor family. In terms of tissue distribution, expressed by the venom gland.

The protein localises to the secreted. Putative sodium channel toxin. The chain is Putative sodium channel toxin Ts34 from Tityus serrulatus (Brazilian scorpion).